A 521-amino-acid polypeptide reads, in one-letter code: Aldehyde dehydrogenase, mitochondrial (521 aa).

The N-terminal 21 residues, 1–21 (MLRPAALAAARLVLRQGRRLL), are a transit peptide targeting the mitochondrion. An SIFI-degron motif is present at residues 13 to 28 (VLRQGRRLLSAAPTQA). An N6-acetyllysine mark is found at K56, K77, and K163. Residue 266-271 (GSTEVG) participates in NAD(+) binding. Residue E289 is the Proton acceptor of the active site. C323 acts as the Nucleophile in catalysis. Residues K372, K379, K387, K430, K432, K445, and K455 each carry the N6-acetyllysine modification.

Belongs to the aldehyde dehydrogenase family. Homotetramer. In response to mitochondrial stress, the precursor protein is ubiquitinated by the SIFI complex in the cytoplasm before mitochondrial import, leading to its degradation. Within the SIFI complex, UBR4 initiates ubiquitin chain that are further elongated or branched by KCMF1.

Its subcellular location is the mitochondrion matrix. It carries out the reaction an aldehyde + NAD(+) + H2O = a carboxylate + NADH + 2 H(+). It functions in the pathway alcohol metabolism; ethanol degradation; acetate from ethanol: step 2/2. Its function is as follows. Required for clearance of cellular formaldehyde, a cytotoxic and carcinogenic metabolite that induces DNA damage. The chain is Aldehyde dehydrogenase, mitochondrial (ALDH2) from Sus scrofa (Pig).